The sequence spans 193 residues: MVTLEYNANSKLITASDAVVALSTETNIDQINVLTTSLIGETNPNFTPQPNEALSKMIKGLFESGMKNLQQKKLNEALKNVSLAIEMAQRKRAPWEAFAIQLPELHFMLRSKIDLCLILGKHLEALQDLDFLLGTGLIQPDVFVRKADCLLKLRQWEEARATCERGLALAPEDMKLRALLIETARNLAEYNGE.

Component of the heterotetrameric Sec62/63complex composed of SEC62, SEC63, SEC71 and SEC72. The Sec62/63 complex associates with the Sec61 complex to form the Sec complex. May interact with protein YLR301W. Part of a complex consisting of KAR2, SEC63, SEC66 and SEC72.

The protein localises to the cytoplasm. Acts as a non-essential component of the Sec62/63 complex which is involved in SRP-independent post-translational translocation across the endoplasmic reticulum (ER) and functions together with the Sec61 complex and KAR2 in a channel-forming translocon complex. A cycle of assembly and disassembly of Sec62/63 complex from SEC61 may govern the activity of the translocon. SEC72 may be involved in signal peptide recognition for a defined subset of leader peptides, or may increase the efficiency of unusual or 'difficult' secretory precursors to the translocation pore, it may be that this protein binds charged leader peptides to the membrane until they engage the translocation apparatus. The chain is Translocation protein SEC72 (SEC72) from Saccharomyces cerevisiae (strain ATCC 204508 / S288c) (Baker's yeast).